The following is a 219-amino-acid chain: Large ribosomal subunit protein uL3 (219 aa).

The protein belongs to the universal ribosomal protein uL3 family. Part of the 50S ribosomal subunit. Forms a cluster with proteins L14 and L19.

One of the primary rRNA binding proteins, it binds directly near the 3'-end of the 23S rRNA, where it nucleates assembly of the 50S subunit. The polypeptide is Large ribosomal subunit protein uL3 (Salinispora arenicola (strain CNS-205)).